A 119-amino-acid chain; its full sequence is Nucleoid-associated protein Cphy_0047 (119 aa).

The interval 23–45 (AQRMQKQMEDKTKEMEEKQWEAT) is disordered. A compositionally biased stretch (basic and acidic residues) spans 28–42 (KQMEDKTKEMEEKQW).

It belongs to the YbaB/EbfC family. In terms of assembly, homodimer.

The protein localises to the cytoplasm. The protein resides in the nucleoid. In terms of biological role, binds to DNA and alters its conformation. May be involved in regulation of gene expression, nucleoid organization and DNA protection. The protein is Nucleoid-associated protein Cphy_0047 of Lachnoclostridium phytofermentans (strain ATCC 700394 / DSM 18823 / ISDg) (Clostridium phytofermentans).